The chain runs to 211 residues: Thymidylate kinase (211 aa).

11-18 (GPDGAGKT) provides a ligand contact to ATP.

Belongs to the thymidylate kinase family.

The catalysed reaction is dTMP + ATP = dTDP + ADP. In terms of biological role, phosphorylation of dTMP to form dTDP in both de novo and salvage pathways of dTTP synthesis. The polypeptide is Thymidylate kinase (Streptococcus pyogenes serotype M1).